The chain runs to 358 residues: Type II restriction enzyme CviJI (358 aa).

Mg(2+) serves as cofactor.

It catalyses the reaction Endonucleolytic cleavage of DNA to give specific double-stranded fragments with terminal 5'-phosphates.. Functionally, a P subtype restriction enzyme that recognizes the double-stranded sequence 5'-RGCY-3' and cleaves after G-2. In the presence of ATP, there is a relaxation of its specificity and it can cleave 5'-RGCN-3' and 5'-YGCY-3', but not 5'-YGCR-3' (R.CviJI* activity). This chain is Type II restriction enzyme CviJI, found in Paramecium bursaria Chlorella virus IL3A (PBCV-IL3A).